A 491-amino-acid chain; its full sequence is Probable Xaa-Pro aminopeptidase AFLA_084750 (491 aa).

4 residues coordinate Mn(2+): D271, D282, E419, and E458.

The protein belongs to the peptidase M24B family. Mn(2+) serves as cofactor.

It catalyses the reaction Release of any N-terminal amino acid, including proline, that is linked to proline, even from a dipeptide or tripeptide.. Catalyzes the removal of a penultimate prolyl residue from the N-termini of peptides. The polypeptide is Probable Xaa-Pro aminopeptidase AFLA_084750 (Aspergillus flavus (strain ATCC 200026 / FGSC A1120 / IAM 13836 / NRRL 3357 / JCM 12722 / SRRC 167)).